A 564-amino-acid polypeptide reads, in one-letter code: Myb-like protein F (564 aa).

3 disordered regions span residues 22 to 107 (YNNS…NYNN), 122 to 203 (NYNN…YNGG), and 310 to 410 (NYNN…TKKY). Low complexity predominate over residues 23–79 (NNSNHYNDNNDNNNNNNNNNNDNNNNDNNNNNNNNNNSIINNESDNESNGTSNNYND). Residues 82–96 (NDNHHHHQDDEHHGN) are compositionally biased toward basic and acidic residues. 4 stretches are compositionally biased toward low complexity: residues 97-107 (GNDNDNENYNN), 135-173 (EINS…NNSK), 193-203 (NNNNNNKYNGG), and 310-364 (NYNN…NSSN). Residues 365–409 (KEYKEKEYKEKEYKEKEFKESKDSSLKRKSSSDDDGDDSGRDTKK) are compositionally biased toward basic and acidic residues. The region spanning 412-464 (PGRTVWTLEEEELYKEVFNHYGKNWKKIKTHFPDKSKSQVTSHGQYLIKINKL) is the SANT domain. The segment covering 519 to 556 (NNENTNDNNNHNNNNYNDNNNNSNNNNNFNNSNNNNTN) has biased composition (low complexity). The segment at 519 to 564 (NNENTNDNNNHNNNNYNDNNNNSNNNNNFNNSNNNNTNKFIDEDDD) is disordered.

The protein resides in the nucleus. This is Myb-like protein F (mybF) from Dictyostelium discoideum (Social amoeba).